Reading from the N-terminus, the 155-residue chain is Small ribosomal subunit protein uS7 (155 aa).

The protein belongs to the universal ribosomal protein uS7 family. In terms of assembly, part of the 30S ribosomal subunit. Contacts proteins S9 and S11.

Functionally, one of the primary rRNA binding proteins, it binds directly to 16S rRNA where it nucleates assembly of the head domain of the 30S subunit. Is located at the subunit interface close to the decoding center, probably blocks exit of the E-site tRNA. This chain is Small ribosomal subunit protein uS7, found in Xanthomonas axonopodis pv. citri (strain 306).